A 438-amino-acid chain; its full sequence is Transcriptional regulator Mb0495 (438 aa).

A compositionally biased stretch (polar residues) spans 1-12; sequence MYSTNRTSQSLS. Residues 1–22 are disordered; that stretch reads MYSTNRTSQSLSRKPGRKHQLR. The segment at residues 52 to 73 is a DNA-binding region (H-T-H motif); it reads VGRDVIAGSTSLSIATVNRQVI.

This sequence belongs to the ROK (NagC/XylR) family.

Functionally, positively regulates the expression of PE13 and PPE18. The sequence is that of Transcriptional regulator Mb0495 from Mycobacterium bovis (strain ATCC BAA-935 / AF2122/97).